We begin with the raw amino-acid sequence, 176 residues long: 3-hydroxydecanoyl-[acyl-carrier-protein] dehydratase (176 aa).

His75 is an active-site residue.

This sequence belongs to the thioester dehydratase family. FabA subfamily. Homodimer.

It localises to the cytoplasm. It carries out the reaction a (3R)-hydroxyacyl-[ACP] = a (2E)-enoyl-[ACP] + H2O. It catalyses the reaction (3R)-hydroxydecanoyl-[ACP] = (2E)-decenoyl-[ACP] + H2O. The enzyme catalyses (2E)-decenoyl-[ACP] = (3Z)-decenoyl-[ACP]. Its pathway is lipid metabolism; fatty acid biosynthesis. In terms of biological role, necessary for the introduction of cis unsaturation into fatty acids. Catalyzes the dehydration of (3R)-3-hydroxydecanoyl-ACP to E-(2)-decenoyl-ACP and then its isomerization to Z-(3)-decenoyl-ACP. Can catalyze the dehydratase reaction for beta-hydroxyacyl-ACPs with saturated chain lengths up to 16:0, being most active on intermediate chain length. The polypeptide is 3-hydroxydecanoyl-[acyl-carrier-protein] dehydratase (Glaesserella parasuis serovar 5 (strain SH0165) (Haemophilus parasuis)).